A 1058-amino-acid chain; its full sequence is Isoleucine--tRNA ligase (1058 aa).

The 'HIGH' region motif lies at 48-58; the sequence is PYTTGHIHLGT. The 'KMSKS' region signature appears at 596–600; the sequence is KMSKS. Lys-599 is an ATP binding site.

It belongs to the class-I aminoacyl-tRNA synthetase family. IleS type 2 subfamily. Monomer. It depends on Zn(2+) as a cofactor.

The protein localises to the cytoplasm. The catalysed reaction is tRNA(Ile) + L-isoleucine + ATP = L-isoleucyl-tRNA(Ile) + AMP + diphosphate. Functionally, catalyzes the attachment of isoleucine to tRNA(Ile). As IleRS can inadvertently accommodate and process structurally similar amino acids such as valine, to avoid such errors it has two additional distinct tRNA(Ile)-dependent editing activities. One activity is designated as 'pretransfer' editing and involves the hydrolysis of activated Val-AMP. The other activity is designated 'posttransfer' editing and involves deacylation of mischarged Val-tRNA(Ile). This chain is Isoleucine--tRNA ligase, found in Methanosarcina barkeri (strain Fusaro / DSM 804).